Reading from the N-terminus, the 352-residue chain is Rhodopsin (352 aa).

Over Met1–Ala36 the chain is Extracellular. N-linked (GlcNAc...) asparagine glycosylation is found at Asn2 and Asn15. A helical membrane pass occupies residues Tyr37–Val61. The Cytoplasmic portion of the chain corresponds to Thr62–Asn73. The helical transmembrane segment at Tyr74–Tyr96 threads the bilayer. At Thr97–Cys110 the chain is on the extracellular side. The cysteines at positions 110 and 187 are disulfide-linked. A helical membrane pass occupies residues Asn111 to Ile133. The short motif at Glu134–Trp136 is the 'Ionic lock' involved in activated form stabilization element. Residues Glu134–His152 lie on the Cytoplasmic side of the membrane. A helical transmembrane segment spans residues Ala153 to Val173. The Extracellular segment spans residues Gly174 to Ser202. N-linked (GlcNAc...) asparagine glycosylation occurs at Asn200. The helical transmembrane segment at Phe203–Gly224 threads the bilayer. Over Arg225–Arg252 the chain is Cytoplasmic. The helical transmembrane segment at Met253 to Tyr274 threads the bilayer. Topologically, residues Ile275 to Pro286 are extracellular. A helical transmembrane segment spans residues Phe287–Cys308. N6-(retinylidene)lysine is present on Lys296. The Cytoplasmic portion of the chain corresponds to Met309–Ala352. 2 S-palmitoyl cysteine lipidation sites follow: Cys322 and Cys323. The tract at residues Glu331–Ala352 is disordered. A compositionally biased stretch (low complexity) spans Ser342–Ala352.

It belongs to the G-protein coupled receptor 1 family. Opsin subfamily. Post-translationally, phosphorylated on some or all of the serine and threonine residues present in the C-terminal region. Contains one covalently linked retinal chromophore.

The protein resides in the membrane. It is found in the cell projection. The protein localises to the cilium. Its subcellular location is the photoreceptor outer segment. In terms of biological role, photoreceptor required for image-forming vision at low light intensity. While most salt water fish species use retinal as chromophore, most freshwater fish use 3-dehydroretinal, or a mixture of retinal and 3-dehydroretinal. Light-induced isomerization of 11-cis to all-trans retinal triggers a conformational change that activates signaling via G-proteins. Subsequent receptor phosphorylation mediates displacement of the bound G-protein alpha subunit by arrestin and terminates signaling. In Zosterisessor ophiocephalus (Grass goby), this protein is Rhodopsin (rho).